The following is a 345-amino-acid chain: High mobility group protein 20A (345 aa).

Disordered regions lie at residues 1 to 130 and 166 to 206; these read MEST…PFPE and QKYQ…EKES. 2 stretches are compositionally biased toward polar residues: residues 22-38 and 57-67; these read NNQP…SSQA and LHQSGEQQLGN. The segment covering 80-94 has biased composition (basic residues); that stretch reads ARRGGWNKGRKRKRS. Residues 101 to 169 constitute a DNA-binding region (HMG box); it reads PKAPLTGYVR…RYTKELQKYQ (69 aa). Residues 112-125 are compositionally biased toward basic and acidic residues; it reads MNERREQLRTERPD. The segment covering 167 to 178 has biased composition (polar residues); sequence KYQNTDAYQTYS. Basic residues predominate over residues 179-189; sequence RKAKSRQKGRQ. Residues 227–285 adopt a coiled-coil conformation; that stretch reads SKAREAELRQLRKSNMEFEERNAALQKHVESMRSAVQRLEAELSQEHERNSLLQQHLQS.

It localises to the nucleus. Functionally, plays a role in neuronal differentiation. The chain is High mobility group protein 20A (hmg20a) from Xenopus laevis (African clawed frog).